A 294-amino-acid chain; its full sequence is Chelated iron transport system membrane protein YfeC (294 aa).

8 helical membrane passes run 17 to 37 (AIWV…YLML), 51 to 71 (VVPG…GAFF), 93 to 113 (AIIG…VSLN), 140 to 160 (IIIL…LAVF), 169 to 189 (IGLS…ACTV), 194 to 214 (TVGA…AYLL), 221 to 241 (LLII…YLSF), and 246 to 266 (ATGG…FFFA).

Belongs to the ABC-3 integral membrane protein family.

It is found in the cell inner membrane. In terms of biological role, part of an ATP-driven transport system YfeABC for chelated iron. In Yersinia pestis, this protein is Chelated iron transport system membrane protein YfeC (yfeC).